The primary structure comprises 143 residues: Myosin 1 light chain cam2 (143 aa).

EF-hand domains are found at residues 6–41, 75–110, and 111–143; these read EQTDEMKEAFVLYDIDKDGLIPTSHVGSVLRSLGIN, ESEEEYIKAFRVFDKDNSGYIETAKFADYMKTLGEK, and LSDNEVQLMVQEADPTNSGSFDYYDFVQRIMAK.

The protein belongs to the calmodulin family. As to quaternary structure, interacts with myo1 and pik1.

It is found in the cytoplasm. The protein localises to the prospore membrane. Functionally, plays a role in meiosis and sporulation. The sequence is that of Myosin 1 light chain cam2 from Schizosaccharomyces pombe (strain 972 / ATCC 24843) (Fission yeast).